The sequence spans 688 residues: Potassium-transporting ATPase ATP-binding subunit (688 aa).

A run of 4 helical transmembrane segments spans residues 34–54, 62–82, 219–239, and 260–280; these read PVMF…LAIL, AMFT…ANMA, VALT…TATL, and VLVA…LSAI. Catalysis depends on D313, which acts as the 4-aspartylphosphate intermediate. Residues D350, E354, 383-390, and K401 each bind ATP; that span reads FSAQTRMS. 2 residues coordinate Mg(2+): D524 and D528. Transmembrane regions (helical) follow at residues 594-614, 622-642, and 662-682; these read FAII…LNIM, AILS…PLAL, and IYGL…DLLL.

Belongs to the cation transport ATPase (P-type) (TC 3.A.3) family. Type IA subfamily. The system is composed of three essential subunits: KdpA, KdpB and KdpC.

The protein resides in the cell inner membrane. It carries out the reaction K(+)(out) + ATP + H2O = K(+)(in) + ADP + phosphate + H(+). Functionally, part of the high-affinity ATP-driven potassium transport (or Kdp) system, which catalyzes the hydrolysis of ATP coupled with the electrogenic transport of potassium into the cytoplasm. This subunit is responsible for energy coupling to the transport system and for the release of the potassium ions to the cytoplasm. The polypeptide is Potassium-transporting ATPase ATP-binding subunit (Yersinia pseudotuberculosis serotype I (strain IP32953)).